We begin with the raw amino-acid sequence, 343 residues long: DNA repair and recombination protein RadA (343 aa).

107 to 114 contacts ATP; that stretch reads GEFGAGKS.

It belongs to the eukaryotic RecA-like protein family.

Its function is as follows. Involved in DNA repair and in homologous recombination. Binds and assemble on single-stranded DNA to form a nucleoprotein filament. Hydrolyzes ATP in a ssDNA-dependent manner and promotes DNA strand exchange between homologous DNA molecules. In Halobacterium salinarum (strain ATCC 29341 / DSM 671 / R1), this protein is DNA repair and recombination protein RadA.